Reading from the N-terminus, the 261-residue chain is uncharacterized protein (261 aa).

One can recognise an N-acetyltransferase domain in the interval 135–261; that stretch reads LVLKRIDEDI…VTEYTIYYSG (127 aa).

The protein belongs to the acetyltransferase family.

This is an uncharacterized protein from Bacillus subtilis (strain 168).